The primary structure comprises 132 residues: NADH-quinone oxidoreductase subunit A (132 aa).

The next 3 helical transmembrane spans lie at 7-27, 62-82, and 91-111; these read YWVLLVYTFVVIALVAGMIGV, FYLIAMFFVIFDLEAAYLYAW, and WTGYLVIAVFILALLAALAYL.

Belongs to the complex I subunit 3 family. As to quaternary structure, NDH-1 is composed of 14 different subunits. Subunits NuoA, H, J, K, L, M, N constitute the membrane sector of the complex.

The protein resides in the cell inner membrane. The catalysed reaction is a quinone + NADH + 5 H(+)(in) = a quinol + NAD(+) + 4 H(+)(out). In terms of biological role, NDH-1 shuttles electrons from NADH, via FMN and iron-sulfur (Fe-S) centers, to quinones in the respiratory chain. The immediate electron acceptor for the enzyme in this species is believed to be ubiquinone. Couples the redox reaction to proton translocation (for every two electrons transferred, four hydrogen ions are translocated across the cytoplasmic membrane), and thus conserves the redox energy in a proton gradient. This Acidiphilium cryptum (strain JF-5) protein is NADH-quinone oxidoreductase subunit A.